Reading from the N-terminus, the 64-residue chain is DNA-binding protein 7b (64 aa).

Residues Lys5 and Lys7 each carry the N6-methyllysine modification.

The protein belongs to the 7 kDa DNA-binding/endoribonuclease P2 family. Monomer. Lys-5 and Lys-7 may be methylated.

The protein localises to the cytoplasm. Its function is as follows. Can constrain negative DNA supercoils. May be involved in maintaining the integrity of the genome at high temperature. The sequence is that of DNA-binding protein 7b from Saccharolobus shibatae (strain ATCC 51178 / DSM 5389 / JCM 8931 / NBRC 15437 / B12) (Sulfolobus shibatae).